The following is a 200-amino-acid chain: Cytochrome c biogenesis ATP-binding export protein CcmA (200 aa).

One can recognise an ABC transporter domain in the interval 2 to 200 (LDVIELDFDY…NKADYEEYHL (199 aa)). 34 to 41 (GSNGAGKT) lines the ATP pocket.

Belongs to the ABC transporter superfamily. CcmA exporter (TC 3.A.1.107) family. In terms of assembly, the complex is composed of two ATP-binding proteins (CcmA) and two transmembrane proteins (CcmB).

It localises to the cell inner membrane. The enzyme catalyses heme b(in) + ATP + H2O = heme b(out) + ADP + phosphate + H(+). Part of the ABC transporter complex CcmAB involved in the biogenesis of c-type cytochromes; once thought to export heme, this seems not to be the case, but its exact role is uncertain. Responsible for energy coupling to the transport system. In Legionella pneumophila (strain Paris), this protein is Cytochrome c biogenesis ATP-binding export protein CcmA.